We begin with the raw amino-acid sequence, 365 residues long: P2Y purinoceptor 4 (365 aa).

The Extracellular portion of the chain corresponds to 1–34; sequence MASTESSLLRSLGLSPGPGSSEVELDCWFDEDFK. The chain crosses the membrane as a helical span at residues 35–61; sequence FILLPVSYAVVFVLGLGLNAPTLWLFI. At 62-72 the chain is on the cytoplasmic side; sequence FRLRPWDATAT. The helical transmembrane segment at 73–95 threads the bilayer; the sequence is YMFHLALSDTLYVLSLPTLIYYY. Over 96–112 the chain is Extracellular; the sequence is AAHNHWPFGTEICKFVR. Cysteine 108 and cysteine 185 are joined by a disulfide. Residues 113–131 traverse the membrane as a helical segment; it reads FLFYWNLYCSVLFLTCISV. At 132 to 154 the chain is on the cytoplasmic side; sequence HRYLGICHPLRALRWGRPRLAGL. Residues 155 to 174 form a helical membrane-spanning segment; it reads LCLAVWLVVAGCLVPNLFFV. Residues 175-196 lie on the Extracellular side of the membrane; that stretch reads TTSNKGTTVLCHDTTRPEEFDH. Residues 197–222 traverse the membrane as a helical segment; it reads YVHFSSAVMGLLFGVPCLVTLVCYGL. Residues 223-246 lie on the Cytoplasmic side of the membrane; sequence MARRLYQPLPGSAQSSSRLRSLRT. The chain crosses the membrane as a helical span at residues 247–269; that stretch reads IAVVLTVFAVCFVPFHITRTIYY. The Extracellular portion of the chain corresponds to 270–287; that stretch reads LARLLEADCRVLNIVNVV. The chain crosses the membrane as a helical span at residues 288–309; that stretch reads YKVTRPLASANSCLDPVLYLLT. The Cytoplasmic portion of the chain corresponds to 310-365; sequence GDKYRRQLRQLCGGGKPQPRTAASSLALVSLPEDSSCRWAATPQDSSCSTPRADRL. A phosphoserine mark is found at serine 333 and serine 334.

This sequence belongs to the G-protein coupled receptor 1 family. Phosphorylation of Ser-333 and Ser-334 is a key step in agonist-dependent desensitization and loss of surface P2RY4. This phosphorylation does not involve PKC, nor other calcium activated kinases. As to expression, pancreas.

Its subcellular location is the cell membrane. Its function is as follows. Receptor for UTP and UDP coupled to G-proteins that activate a phosphatidylinositol-calcium second messenger system. Not activated by ATP or ADP. This is P2Y purinoceptor 4 (P2RY4) from Homo sapiens (Human).